The chain runs to 643 residues: Versicolorin B synthase (643 aa).

The propeptide occupies 1–41 (MGRNWFQVTAMAVVPVVGIMAAVNPTILSSAASSLPSLGAM). FAD contacts are provided by residues 84 to 85 (TA) and 105 to 106 (EA). A glycan (N-linked (GlcNAc...) asparagine) is linked at Asn116. 171 to 174 (GAML) is an FAD binding site. 2 N-linked (GlcNAc...) asparagine glycosylation sites follow: Asn221 and Asn507. FAD contacts are provided by residues Ala613 and 624-625 (PM).

This sequence belongs to the GMC oxidoreductase family. Homodimer. It depends on FAD as a cofactor. Post-translationally, N-glycosylated.

The protein localises to the cytoplasm. It localises to the cytosol. It carries out the reaction (2S-3S)-versiconal hemiacetal = versicolorin B + H2O. The enzyme catalyses (S)-5'-oxoaverantin + H(+) = (1'S,5'S)-averufin + H2O. It functions in the pathway mycotoxin biosynthesis; aflatoxin biosynthesis. In terms of biological role, dual cyclase; part of the gene cluster that mediates the biosynthesis of aflatoxins, a group of polyketide-derived furanocoumarins, and part of the most toxic and carcinogenic compounds among the known mycotoxins. The four major aflatoxins produced by A.parasiticus are aflatoxin B1 (AFB1), aflatoxin B2 (AFB2), aflatoxin G1 (AFG1) and aflatoxin G2 (AFG2). Aflk plays a dual role within the aflatoxin pathway, as a 5'-oxoaverantin cyclase that mediates conversion of 5'-oxoaverantin (OAVN) to averufin (AVF), as well as a versicolorin B synthase that converts versiconal (VAL) to versicolorin B (VERB) by closing the bisfuran ring of aflatoxin which is required for DNA-binding, thus giving to aflatoxin its activity as a mutagen. The biosynthesis of aflatoxins begins with the norsolorinic acid synthase aflC that combines a hexanoyl starter unit produced by the fatty acid synthase aflA/aflB and 7 malonyl-CoA extender units to synthesize the precursor NOR. The second step is the conversion of NOR to averantin and requires the norsolorinic acid ketoreductase aflD, which catalyzes the dehydration of norsolorinic acid to form (1'S)-averantin. The norsolorinic acid reductases aflE and aflF may also play a role in the conversion of NOR to AVN. The cytochrome P450 monooxygenase aflG then catalyzes the hydroxylation of AVN to 5'hydroxyaverantin (HAVN). The next step is performed by the 5'-hydroxyaverantin dehydrogenase aflH that transforms HAVN to 5'-oxoaverantin (OAVN) which is further converted to averufin (AVF) by aflK that plays a dual role in the pathway, as a 5'-oxoaverantin cyclase that mediates conversion of 5'-oxoaverantin, as well as a versicolorin B synthase in a later step in the pathway. The averufin oxidase aflI catalyzes the conversion of AVF to versiconal hemiacetal acetate (VHA). VHA is then the substrate for the versiconal hemiacetal acetate esterase aflJ to yield versiconal (VAL). Versicolorin B synthase aflK then converts VAL to versicolorin B (VERB) by closing the bisfuran ring of aflatoxin which is required for DNA-binding, thus giving to aflatoxin its activity as a mutagen. Then, the activity of the versicolorin B desaturase aflL leads to versicolorin A (VERA). A branch point starts from VERB since it can also be converted to dihydrodemethylsterigmatocystin (DMDHST), probably also by aflL, VERA being a precursor for aflatoxins B1 and G1, and DMDHST for aflatoxins B2 and G2. Next, the versicolorin reductase aflM and the cytochrome P450 monooxygenase aflN are involved in conversion of VERA to demethylsterigmatocystin (DMST). AflX and aflY seem also involved in this step, through probable aflX-mediated epoxide ring-opening step following versicolorin A oxidation and aflY-mediated Baeyer-Villiger oxidation required for the formation of the xanthone ring. The methyltransferase aflO then leads to the modification of DMST to sterigmatocystin (ST), and of DMDHST to dihydrosterigmatocystin (DHST). Both ST and DHST are then substrates of the O-methyltransferase aflP to yield O-methylsterigmatocystin (OMST) and dihydro-O-methylsterigmatocystin (DHOMST), respectively. Finally OMST is converted to aflatoxins B1 and G1, and DHOMST to aflatoxins B2 and G2, via the action of several enzymes including O-methylsterigmatocystin oxidoreductase aflQ, the cytochrome P450 monooxygenase aflU, but also the NADH-dependent flavin oxidoreductase nadA which is specifically required for the synthesis of AFG1. This chain is Versicolorin B synthase, found in Aspergillus parasiticus (strain ATCC 56775 / NRRL 5862 / SRRC 143 / SU-1).